Reading from the N-terminus, the 762-residue chain is uncharacterized protein (762 aa).

A disordered region spans residues 1-26 (MENLKSASPEEDSPRHGDNMGKPKRI). Residues 12–21 (DSPRHGDNMG) show a composition bias toward basic and acidic residues. A DNA-binding region (zn(2)-C6 fungal-type) is located at residues 30–57 (CDMCRKRKIRCDGKQPACSNCVSHGIPC). The disordered stretch occupies residues 647–668 (QSHVPPRISSNHSDTSVKSNSP).

It localises to the nucleus. This is an uncharacterized protein from Schizosaccharomyces pombe (strain 972 / ATCC 24843) (Fission yeast).